The primary structure comprises 302 residues: MDKDKVLLVLHGKQAGNEEVRAAVAAQREAGRELAVRVTWEDGDARRIVEEALAAGFATLVAGGGDGTLREVAEALARGRGEASLAILPLGTANDFARAAGIPLEPAAALALLDQTARPIDLGAVNGKLFLNMATGGFGSKVTANTSEDLKKVLGGAAYLLTGLTRFSEVHAAQGRFSAPDFQWEGEFLALGIGNGRQAGGGHVLCPQARVDDGLLDVSILPTPQDMVGTLGTLLGGGNGVESLFVRARVPWLEVEAAEGLDVNLDGEPLEGRKLRFSVSPGALRVHLPAGSPLLREPPRED.

In terms of domain architecture, DAGKc spans 1–129 (MDKDKVLLVL…IDLGAVNGKL (129 aa)). Residues T39, 65–71 (GDGTLRE), and T92 contribute to the ATP site. Residues R210, D213, and L215 each contribute to the Mg(2+) site. E268 acts as the Proton acceptor in catalysis.

The protein belongs to the diacylglycerol/lipid kinase family. YegS lipid kinase subfamily. The cofactor is Mg(2+). Requires Ca(2+) as cofactor.

Its subcellular location is the cytoplasm. Functionally, probably phosphorylates lipids; the in vivo substrate is unknown. The chain is Probable lipid kinase YegS-like from Pseudomonas aeruginosa (strain UCBPP-PA14).